Consider the following 536-residue polypeptide: Zinc finger protein 394 (536 aa).

The tract at residues alanine 18 to lysine 45 is disordered. Lysine 20 is covalently cross-linked (Glycyl lysine isopeptide (Lys-Gly) (interchain with G-Cter in SUMO2)). Polar residues predominate over residues proline 26 to glutamate 41. An SCAN box domain is found at arginine 44–leucine 126. Positions alanine 135–serine 196 constitute a KRAB domain. Glycyl lysine isopeptide (Lys-Gly) (interchain with G-Cter in SUMO2) cross-links involve residues lysine 207 and lysine 260. 3 C2H2-type zinc fingers span residues tyrosine 328–histidine 350, tyrosine 356–histidine 378, and tyrosine 384–histidine 406. The segment at cysteine 412 to histidine 433 adopts a C2H2-type 4; atypical zinc-finger fold. Lysine 413 is covalently cross-linked (Glycyl lysine isopeptide (Lys-Gly) (interchain with G-Cter in SUMO2)). 3 consecutive C2H2-type zinc fingers follow at residues histidine 439 to histidine 461, tyrosine 467 to histidine 489, and tyrosine 495 to histidine 517.

This sequence belongs to the krueppel C2H2-type zinc-finger protein family.

The protein resides in the nucleus. In terms of biological role, may be involved in transcriptional regulation. The sequence is that of Zinc finger protein 394 (Znf394) from Rattus norvegicus (Rat).